The chain runs to 300 residues: Cation-efflux pump FieF (300 aa).

Transmembrane regions (helical) follow at residues 12–32, 39–59, 82–102, and 114–134; these read AAIA…FAWW, ILAA…NLLV, AALA…LTGI, and PGVG…LVSF. Zn(2+)-binding residues include D45 and D49. Residues H153 and D157 each contribute to the Zn(2+) site. The next 2 membrane-spanning stretches (helical) occupy residues 156 to 176 and 178 to 198; these read SDVM…YGWH and ADAL…LRMG.

Belongs to the cation diffusion facilitator (CDF) transporter (TC 2.A.4) family. FieF subfamily. In terms of assembly, homodimer.

It localises to the cell inner membrane. The catalysed reaction is Zn(2+)(in) + H(+)(out) = Zn(2+)(out) + H(+)(in). It carries out the reaction Cd(2+)(in) + H(+)(out) = Cd(2+)(out) + H(+)(in). The enzyme catalyses Fe(2+)(in) + H(+)(out) = Fe(2+)(out) + H(+)(in). Its function is as follows. Divalent metal cation transporter which exports Zn(2+), Cd(2+) and possibly Fe(2+). May be involved in zinc and iron detoxification by efflux. The protein is Cation-efflux pump FieF of Shigella flexneri serotype 5b (strain 8401).